The sequence spans 258 residues: Snake venom serine protease HS114 (258 aa).

A signal peptide spans 1–18; that stretch reads MVLVRVVANLLILQLSYA. The propeptide occupies 19 to 24; sequence QKVSEL. In terms of domain architecture, Peptidase S1 spans 25–249; that stretch reads VVGGDECNIN…YNTWIESVIA (225 aa). Intrachain disulfides connect Cys-31–Cys-163, Cys-50–Cys-66, Cys-98–Cys-256, Cys-142–Cys-210, Cys-174–Cys-189, and Cys-200–Cys-225. N-linked (GlcNAc...) asparagine glycosylation is present at Asn-44. Active-site charge relay system residues include His-65 and Asp-110. Ser-204 functions as the Charge relay system in the catalytic mechanism.

It belongs to the peptidase S1 family. Snake venom subfamily. Monomer. In terms of processing, N-glycosylated. Contains approximately 10% carbohydrates. In terms of tissue distribution, expressed by the venom gland.

The protein resides in the secreted. Inhibited by benzamidine, PMSF, leupeptin, SDS and DTT, but not by EDTA, and commercial antivenom. Functionally, snake venom serine protease that shows non-specific action on fibrinogen. It preferentially degrades fibrinogen Aalpha (FGA), releasing fibrinopeptide A, and shows a lower activity on fibrinogen Bbeta (FGB), releasing fibrinopeptide B and other uncommon fibrinopeptides. Also shows low fibrinolytic activity compared to plasmin. Has high enzymatic activity on the substrates for activated protein C and factor XIa, and for thrombin. Shows a wide activity spectrum at different peptide sequences, with a preferential cleavage at Lys-|-Xaa over Arg-|-Xaa bonds. The chain is Snake venom serine protease HS114 from Bothrops jararaca (Jararaca).